We begin with the raw amino-acid sequence, 407 residues long: Arylacetamide deacetylase-like 3 (407 aa).

The Involved in the stabilization of the negatively charged intermediate by the formation of the oxyanion hole signature appears at 119–121 (HGG). Residues S193, D347, and H377 contribute to the active site.

It belongs to the 'GDXG' lipolytic enzyme family.

In Homo sapiens (Human), this protein is Arylacetamide deacetylase-like 3 (AADACL3).